Consider the following 469-residue polypeptide: Adenosylhomocysteinase (469 aa).

The substrate site is built by Thr58, Asp133, and Glu195. Residue 196 to 198 (TTT) coordinates NAD(+). 2 residues coordinate substrate: Lys225 and Asp229. NAD(+) contacts are provided by residues Asn230, 259–264 (GFGDVG), Glu282, Asn317, 338–340 (IGH), and Asn383.

The protein belongs to the adenosylhomocysteinase family. NAD(+) serves as cofactor.

It localises to the cytoplasm. The catalysed reaction is S-adenosyl-L-homocysteine + H2O = L-homocysteine + adenosine. Its pathway is amino-acid biosynthesis; L-homocysteine biosynthesis; L-homocysteine from S-adenosyl-L-homocysteine: step 1/1. May play a key role in the regulation of the intracellular concentration of adenosylhomocysteine. The sequence is that of Adenosylhomocysteinase from Rhodopseudomonas palustris (strain ATCC BAA-98 / CGA009).